The primary structure comprises 360 residues: MLVWLAEHLVKYYSGFNVFSYLTFRAIVSLLTALFISLWMGPRMIARLQKLSFGQVVRNDGPESHFSKRGTPTMGGIMILTAITVSVLLWAYPSNPYVWCVLTVLIGYGIIGFVDDYRKVVRKDTKGLIARWKYFWMSVIALGVAFALYLAGKDTPATELVVPFFKDVMPQLGLLYILLAYFVIVGTGNAVNLTDGLDGLAIMPTVFVAAGFALVAWATGNMNFANYLHIPYLRHAGELVIVCTAIVGAGLGFLWFNTYPAQVFMGDVGSLALGGALGIIAVLLRQEFLLVIMGGVFVVETLSVILQVGSFKLRGQRIFRMAPIHHHYELKGWPEPRVIVRFWIISLMLVLIGLATLKVR.

10 helical membrane-spanning segments follow: residues 26–46, 72–92, 94–114, 132–152, 168–188, 199–219, 236–256, 263–283, 288–308, and 338–358; these read AIVSLLTALFISLWMGPRMIA, PTMGGIMILTAITVSVLLWAY, SNPYVWCVLTVLIGYGIIGFV, WKYFWMSVIALGVAFALYLAG, VMPQLGLLYILLAYFVIVGTG, GLAIMPTVFVAAGFALVAWAT, AGELVIVCTAIVGAGLGFLWF, VFMGDVGSLALGGALGIIAVL, FLLVIMGGVFVVETLSVILQV, and VIVRFWIISLMLVLIGLATLK.

The protein belongs to the glycosyltransferase 4 family. MraY subfamily. The cofactor is Mg(2+).

The protein resides in the cell inner membrane. The enzyme catalyses UDP-N-acetyl-alpha-D-muramoyl-L-alanyl-gamma-D-glutamyl-meso-2,6-diaminopimeloyl-D-alanyl-D-alanine + di-trans,octa-cis-undecaprenyl phosphate = di-trans,octa-cis-undecaprenyl diphospho-N-acetyl-alpha-D-muramoyl-L-alanyl-D-glutamyl-meso-2,6-diaminopimeloyl-D-alanyl-D-alanine + UMP. Its pathway is cell wall biogenesis; peptidoglycan biosynthesis. Functionally, catalyzes the initial step of the lipid cycle reactions in the biosynthesis of the cell wall peptidoglycan: transfers peptidoglycan precursor phospho-MurNAc-pentapeptide from UDP-MurNAc-pentapeptide onto the lipid carrier undecaprenyl phosphate, yielding undecaprenyl-pyrophosphoryl-MurNAc-pentapeptide, known as lipid I. The chain is Phospho-N-acetylmuramoyl-pentapeptide-transferase from Klebsiella pneumoniae (strain 342).